We begin with the raw amino-acid sequence, 146 residues long: Transcriptional repressor NrdR (146 aa).

Residues 3 to 34 fold into a zinc finger; it reads CPFCQNPDTKVIDTRISDDGHSIRRRRVCPKC. One can recognise an ATP-cone domain in the interval 46 to 136; sequence LLVTKRSGGV…VYQNFAGLED (91 aa).

The protein belongs to the NrdR family. Zn(2+) is required as a cofactor.

In terms of biological role, negatively regulates transcription of bacterial ribonucleotide reductase nrd genes and operons by binding to NrdR-boxes. The sequence is that of Transcriptional repressor NrdR from Bifidobacterium longum (strain NCC 2705).